A 296-amino-acid polypeptide reads, in one-letter code: MKFENCRDCREEVVWWAFTADICMTLFKGVLGLMSGSVALVADSLHSGADVVASGVTQLSLKISNKPADERYPFGYGNIQYISSSIVGSLLLIGASFLMYGSVMKLISGTYEAPSIFAAVGASVTVIVNELMYRYQICVGNENNSPAIIANAWDNRSDAISSAAVMVGVIASVIGFPIADTIAAIGVSALVGRIGLELIGTSIHGLMDSSVDTELLQTAWQVAMDTPMVHSIYFLRGRHVGEDVQFDIRLRVDPNLRIKDSSMVAEAVRRRIQEEIPHARDIRLFVSPAPAAAARA.

Topologically, residues 1–12 (MKFENCRDCREE) are cytoplasmic. The tract at residues 1–214 (MKFENCRDCR…GLMDSSVDTE (214 aa)) is transmembrane domain (TMD). Residues 13–33 (VVWWAFTADICMTLFKGVLGL) traverse the membrane as a helical segment. At 34–83 (MSGSVALVADSLHSGADVVASGVTQLSLKISNKPADERYPFGYGNIQYIS) the chain is on the lumenal side. A helical membrane pass occupies residues 84-104 (SSIVGSLLLIGASFLMYGSVM). The Cytoplasmic portion of the chain corresponds to 105–112 (KLISGTYE). The chain crosses the membrane as a helical span at residues 113–133 (APSIFAAVGASVTVIVNELMY). Residues 134-164 (RYQICVGNENNSPAIIANAWDNRSDAISSAA) lie on the Lumenal side of the membrane. Residues 165–185 (VMVGVIASVIGFPIADTIAAI) traverse the membrane as a helical segment. The Cytoplasmic portion of the chain corresponds to 186–296 (GVSALVGRIG…SPAPAAAARA (111 aa)). The segment at 215 to 296 (LLQTAWQVAM…SPAPAAAARA (82 aa)) is C-terminal domain (CTD).

It belongs to the cation diffusion facilitator (CDF) transporter (TC 2.A.4) family. As to quaternary structure, forms heterodimers with MamM. Probably interacts with MamE.

Its subcellular location is the magnetosome membrane. Its function is as follows. Plays a dual, essential role in magnetosome formation; required for magnetosome vesicle formation as well as biomineralization. Probably binds and transports iron. Requires heterodimerization with MamM for stability. The protein is Magnetosome protein MamB (mamB) of Paramagnetospirillum magneticum (strain ATCC 700264 / AMB-1) (Magnetospirillum magneticum).